A 135-amino-acid chain; its full sequence is Large ribosomal subunit protein eL27y (135 aa).

This sequence belongs to the eukaryotic ribosomal protein eL27 family.

This Arabidopsis thaliana (Mouse-ear cress) protein is Large ribosomal subunit protein eL27y (RPL27B).